A 108-amino-acid chain; its full sequence is PTS system fructose-like EIIB component 1 (108 aa).

Positions 1-104 (MSKKLIALCA…IIKEIEEMIA (104 aa)) constitute a PTS EIIB type-2 domain. Cysteine 11 acts as the Phosphocysteine intermediate in catalysis. Phosphocysteine; by EIIA is present on cysteine 11.

It is found in the cytoplasm. The enzyme catalyses D-fructose(out) + N(pros)-phospho-L-histidyl-[protein] = D-fructose 1-phosphate(in) + L-histidyl-[protein]. Its function is as follows. The phosphoenolpyruvate-dependent sugar phosphotransferase system (sugar PTS), a major carbohydrate active transport system, catalyzes the phosphorylation of incoming sugar substrates concomitantly with their translocation across the cell membrane. The enzyme II FryABC PTS system is involved in fructose transport. This is PTS system fructose-like EIIB component 1 (fryB) from Escherichia coli O157:H7.